The following is a 385-amino-acid chain: S-adenosylmethionine synthase (385 aa).

Position 15 (H15) interacts with ATP. Residue D17 coordinates Mg(2+). E43 is a binding site for K(+). Positions 56 and 99 each coordinate L-methionine. The segment at 99-109 (QSPDINQGVDR) is flexible loop. ATP is bound by residues 164 to 166 (DAK), 230 to 231 (RF), D239, 245 to 246 (RK), A262, and K266. D239 serves as a coordination point for L-methionine. Position 270 (K270) interacts with L-methionine.

This sequence belongs to the AdoMet synthase family. As to quaternary structure, homotetramer; dimer of dimers. Requires Mg(2+) as cofactor. K(+) serves as cofactor.

It is found in the cytoplasm. It carries out the reaction L-methionine + ATP + H2O = S-adenosyl-L-methionine + phosphate + diphosphate. It participates in amino-acid biosynthesis; S-adenosyl-L-methionine biosynthesis; S-adenosyl-L-methionine from L-methionine: step 1/1. Its function is as follows. Catalyzes the formation of S-adenosylmethionine (AdoMet) from methionine and ATP. The overall synthetic reaction is composed of two sequential steps, AdoMet formation and the subsequent tripolyphosphate hydrolysis which occurs prior to release of AdoMet from the enzyme. The chain is S-adenosylmethionine synthase from Hamiltonella defensa subsp. Acyrthosiphon pisum (strain 5AT).